The sequence spans 276 residues: Integrin-binding sialoprotein (276 aa).

The first 16 residues, Met-1 to Ala-16, serve as a signal peptide directing secretion. Positions His-54–Arg-251 are disordered. Residues Ser-61–Gly-75 show a composition bias toward acidic residues. Over residues Gln-106–Ser-119 the composition is skewed to basic and acidic residues. Residues Arg-116–Asp-118 carry the Cell attachment site motif. The span at Gly-120 to Asp-144 shows a compositional bias: acidic residues. Residues Val-145 to Val-165 are compositionally biased toward polar residues. Residues Asn-148, Asn-153, and Asn-162 are each glycosylated (N-linked (GlcNAc...) asparagine). Residues Ala-167–Glu-188 show a composition bias toward acidic residues. The segment covering Ala-189–Glu-200 has biased composition (low complexity). The short motif at Arg-228 to Asp-230 is the Cell attachment site element. Residues Arg-246–Asp-248 carry the Integrin-binding motif motif. Sulfotyrosine occurs at positions 272 and 273.

Monomer. Interacts with integrins; the interaction promotes cell adhesion. In terms of processing, phosphorylated on serine and threonine residues.

It is found in the secreted. Its function is as follows. Binds tightly to hydroxyapatite. Appears to form an integral part of the mineralized matrix. Probably important to cell-matrix interaction. Promotes adhesion and migration of various cells via the alpha-V/beta-3 integrin receptor (ITGAV:ITGB3). This Gallus gallus (Chicken) protein is Integrin-binding sialoprotein (IBSP).